A 431-amino-acid polypeptide reads, in one-letter code: Chaperone SurA (431 aa).

The N-terminal stretch at 1–22 (MKLWKPTLISVLSALTLFNAHA) is a signal peptide. 2 PpiC domains span residues 173-271 (TVQY…KIDD) and 280-380 (VTEV…EVLD).

It localises to the periplasm. The enzyme catalyses [protein]-peptidylproline (omega=180) = [protein]-peptidylproline (omega=0). In terms of biological role, chaperone involved in the correct folding and assembly of outer membrane proteins. Recognizes specific patterns of aromatic residues and the orientation of their side chains, which are found more frequently in integral outer membrane proteins. May act in both early periplasmic and late outer membrane-associated steps of protein maturation. The sequence is that of Chaperone SurA from Vibrio cholerae serotype O1 (strain ATCC 39315 / El Tor Inaba N16961).